Consider the following 248-residue polypeptide: Proteasome subunit alpha (248 aa).

Ser2 is subject to N-acetylserine; partial.

This sequence belongs to the peptidase T1A family. In terms of assembly, the 20S proteasome core is composed of 14 alpha and 14 beta subunits that assemble into four stacked heptameric rings, resulting in a barrel-shaped structure. The two inner rings, each composed of seven catalytic beta subunits, are sandwiched by two outer rings, each composed of seven alpha subunits. The catalytic chamber with the active sites is on the inside of the barrel. Has a gated structure, the ends of the cylinder being occluded by the N-termini of the alpha-subunits. Is capped by the proteasome-associated ATPase, ARC.

It localises to the cytoplasm. It functions in the pathway protein degradation; proteasomal Pup-dependent pathway. The formation of the proteasomal ATPase ARC-20S proteasome complex, likely via the docking of the C-termini of ARC into the intersubunit pockets in the alpha-rings, may trigger opening of the gate for substrate entry. Interconversion between the open-gate and close-gate conformations leads to a dynamic regulation of the 20S proteasome proteolysis activity. Its function is as follows. Component of the proteasome core, a large protease complex with broad specificity involved in protein degradation. The sequence is that of Proteasome subunit alpha from Mycobacterium tuberculosis (strain CDC 1551 / Oshkosh).